The following is a 425-amino-acid chain: Histidine--tRNA ligase (425 aa).

This sequence belongs to the class-II aminoacyl-tRNA synthetase family. Homodimer.

The protein resides in the cytoplasm. It catalyses the reaction tRNA(His) + L-histidine + ATP = L-histidyl-tRNA(His) + AMP + diphosphate + H(+). This is Histidine--tRNA ligase from Pelotomaculum thermopropionicum (strain DSM 13744 / JCM 10971 / SI).